A 471-amino-acid polypeptide reads, in one-letter code: ATP synthase subunit beta (471 aa).

153-160 (GGAGVGKT) contacts ATP.

This sequence belongs to the ATPase alpha/beta chains family. F-type ATPases have 2 components, CF(1) - the catalytic core - and CF(0) - the membrane proton channel. CF(1) has five subunits: alpha(3), beta(3), gamma(1), delta(1), epsilon(1). CF(0) has three main subunits: a(1), b(2) and c(9-12). The alpha and beta chains form an alternating ring which encloses part of the gamma chain. CF(1) is attached to CF(0) by a central stalk formed by the gamma and epsilon chains, while a peripheral stalk is formed by the delta and b chains.

Its subcellular location is the cell membrane. It carries out the reaction ATP + H2O + 4 H(+)(in) = ADP + phosphate + 5 H(+)(out). Its function is as follows. Produces ATP from ADP in the presence of a proton gradient across the membrane. The catalytic sites are hosted primarily by the beta subunits. In Levilactobacillus brevis (strain ATCC 367 / BCRC 12310 / CIP 105137 / JCM 1170 / LMG 11437 / NCIMB 947 / NCTC 947) (Lactobacillus brevis), this protein is ATP synthase subunit beta.